Here is a 400-residue protein sequence, read N- to C-terminus: Tryptophan synthase beta chain (400 aa).

An N6-(pyridoxal phosphate)lysine modification is found at K92.

This sequence belongs to the TrpB family. As to quaternary structure, tetramer of two alpha and two beta chains. Pyridoxal 5'-phosphate serves as cofactor.

The catalysed reaction is (1S,2R)-1-C-(indol-3-yl)glycerol 3-phosphate + L-serine = D-glyceraldehyde 3-phosphate + L-tryptophan + H2O. The protein operates within amino-acid biosynthesis; L-tryptophan biosynthesis; L-tryptophan from chorismate: step 5/5. Its function is as follows. The beta subunit is responsible for the synthesis of L-tryptophan from indole and L-serine. This is Tryptophan synthase beta chain from Neisseria gonorrhoeae (strain NCCP11945).